A 500-amino-acid polypeptide reads, in one-letter code: Inner membrane transporter YjeM (500 aa).

Topologically, residues 1-7 are cytoplasmic; that stretch reads MPHTIKK. A helical membrane pass occupies residues 8–28; sequence MSLIGLILMIFTSVFGFANSP. At 29–37 the chain is on the periplasmic side; sequence SAYYLMGYS. A helical membrane pass occupies residues 38–58; it reads AIPFYIFSALLFFIPFALMMA. The Cytoplasmic portion of the chain corresponds to 59–82; that stretch reads EMGAAYRKEEGGIYSWMNNSVGPR. The helical transmembrane segment at 83 to 103 threads the bilayer; the sequence is FAFIGTFMWFSSYIIWMVSTS. Topologically, residues 104–132 are periplasmic; it reads AKVWVPFSTFLYGSDMTQHWRIAGLEPTQ. A helical transmembrane segment spans residues 133–153; the sequence is VVGLLAVAWMILVTVVASKGI. Over 154 to 163 the chain is Cytoplasmic; the sequence is NKIARITAVG. Residues 164 to 184 traverse the membrane as a helical segment; sequence GIAVMCLNLVLLLVSITILLL. Residues 185–209 are Periplasmic-facing; it reads NGGHFAQDINFLASPNPGYQSGLAM. The chain crosses the membrane as a helical span at residues 210–230; sequence LSFVVFAIFAYGGIEAVGGLV. Residues 231 to 243 are Cytoplasmic-facing; the sequence is DKTENPEKNFAKG. Residues 244–264 traverse the membrane as a helical segment; the sequence is IVFAAIVISIGYSLAIFLWGV. The Periplasmic portion of the chain corresponds to 265–319; it reads STNWQQVLSNGSVNLGNITYVLMKSLGMTLGNALHLSPEASLSLGVWFARITGLS. The helical transmembrane segment at 320 to 340 threads the bilayer; that stretch reads MFLAYTGAFFTLCYSPLKAII. Residues 341-369 lie on the Cytoplasmic side of the membrane; that stretch reads QGTPKALWPEPMTRLNAMGMPSIAMWMQC. A helical membrane pass occupies residues 370 to 390; sequence GLVTVFILLVSFGGGTASAFF. Residues 391–394 are Periplasmic-facing; it reads NKLT. The chain crosses the membrane as a helical span at residues 395–415; sequence LMANVSMTLPYLFLALAFPFF. Residues 416–433 are Cytoplasmic-facing; that stretch reads KARQDLDRPFVIFKTHLS. A helical membrane pass occupies residues 434 to 454; sequence AMIATVVVVLVVTFANVFTII. Over 455–462 the chain is Periplasmic; the sequence is QPVVEAGD. Residues 463–483 form a helical membrane-spanning segment; that stretch reads WDSTLWMIGGPVFFSLLAMAI. Residues 484–500 are Cytoplasmic-facing; the sequence is YQNYCSRVAKNPQWAVE.

Belongs to the amino acid-polyamine-organocation (APC) superfamily.

It localises to the cell inner membrane. The protein is Inner membrane transporter YjeM (yjeM) of Escherichia coli (strain K12).